The sequence spans 433 residues: 3-phosphoshikimate 1-carboxyvinyltransferase (433 aa).

Positions 23, 24, and 28 each coordinate 3-phosphoshikimate. A phosphoenolpyruvate-binding site is contributed by lysine 23. Phosphoenolpyruvate-binding residues include glycine 95 and arginine 123. 3-phosphoshikimate is bound by residues serine 170, serine 171, glutamine 172, serine 198, aspartate 317, and lysine 344. Glutamine 172 provides a ligand contact to phosphoenolpyruvate. Aspartate 317 acts as the Proton acceptor in catalysis. The phosphoenolpyruvate site is built by arginine 348, arginine 391, and lysine 416.

The protein belongs to the EPSP synthase family. Monomer.

The protein resides in the cytoplasm. It catalyses the reaction 3-phosphoshikimate + phosphoenolpyruvate = 5-O-(1-carboxyvinyl)-3-phosphoshikimate + phosphate. It functions in the pathway metabolic intermediate biosynthesis; chorismate biosynthesis; chorismate from D-erythrose 4-phosphate and phosphoenolpyruvate: step 6/7. Catalyzes the transfer of the enolpyruvyl moiety of phosphoenolpyruvate (PEP) to the 5-hydroxyl of shikimate-3-phosphate (S3P) to produce enolpyruvyl shikimate-3-phosphate and inorganic phosphate. The protein is 3-phosphoshikimate 1-carboxyvinyltransferase of Neisseria meningitidis serogroup B (strain ATCC BAA-335 / MC58).